Consider the following 158-residue polypeptide: 3-hydroxyacyl-[acyl-carrier-protein] dehydratase FabZ (158 aa).

His60 is an active-site residue.

Belongs to the thioester dehydratase family. FabZ subfamily.

Its subcellular location is the cytoplasm. It carries out the reaction a (3R)-hydroxyacyl-[ACP] = a (2E)-enoyl-[ACP] + H2O. In terms of biological role, involved in unsaturated fatty acids biosynthesis. Catalyzes the dehydration of short chain beta-hydroxyacyl-ACPs and long chain saturated and unsaturated beta-hydroxyacyl-ACPs. This chain is 3-hydroxyacyl-[acyl-carrier-protein] dehydratase FabZ, found in Zymomonas mobilis subsp. mobilis (strain ATCC 31821 / ZM4 / CP4).